The primary structure comprises 454 residues: MTTSERRYHITTFGCQMNKADSERMAGILEDIGYQWSDDPNEADLVLYNTCTIRDNAEQKVYSYLGRQAKRKHEKPDLTLIVAGCVAQQEGEKLLRRVPELDLVMGPQHANRLQDLLQEVLAGNQVVATEPIHIVEDITKPRRESTVTAWVNVIYGCNERCTYCVVPNVRGVEQSRTPQAIRAEMVELGQQGYKEITLLGQNIDAYGRDLPGVTESGRHQHTLTDLLYYVNDVPGIERIRFATSHPRYFTERLIVACKELPKVCEHFHIPFQSGDNDLLKAMKRGYTHERYRQIIDKIREYMPDASISADAIVGFPGETEAQFENTLKLVEDIGFDQLNTAAYSPRPGTPAALWDNQLSEEVKSDRLQRLNHLVAIKAAERSQRYLGRIEEVLVEDVNPKDLTQVMGRTRGNRLTFFTGDINQLKGQLVEVKITDVRAFSLTGEPVKILSTSLS.

The MTTase N-terminal domain occupies 6 to 122 (RRYHITTFGC…LQDLLQEVLA (117 aa)). 6 residues coordinate [4Fe-4S] cluster: Cys-15, Cys-51, Cys-85, Cys-157, Cys-161, and Cys-164. One can recognise a Radical SAM core domain in the interval 143 to 380 (RESTVTAWVN…NHLVAIKAAE (238 aa)). A TRAM domain is found at 383–447 (QRYLGRIEEV…AFSLTGEPVK (65 aa)).

This sequence belongs to the methylthiotransferase family. MiaB subfamily. Monomer. The cofactor is [4Fe-4S] cluster.

It localises to the cytoplasm. It catalyses the reaction N(6)-dimethylallyladenosine(37) in tRNA + (sulfur carrier)-SH + AH2 + 2 S-adenosyl-L-methionine = 2-methylsulfanyl-N(6)-dimethylallyladenosine(37) in tRNA + (sulfur carrier)-H + 5'-deoxyadenosine + L-methionine + A + S-adenosyl-L-homocysteine + 2 H(+). Catalyzes the methylthiolation of N6-(dimethylallyl)adenosine (i(6)A), leading to the formation of 2-methylthio-N6-(dimethylallyl)adenosine (ms(2)i(6)A) at position 37 in tRNAs that read codons beginning with uridine. The polypeptide is tRNA-2-methylthio-N(6)-dimethylallyladenosine synthase (Gloeothece citriformis (strain PCC 7424) (Cyanothece sp. (strain PCC 7424))).